Here is a 1282-residue protein sequence, read N- to C-terminus: Protein crumbs homolog 2 (1282 aa).

A signal peptide spans 1–35; sequence MALVGPRIWGPRRDIYPLLLLLLLLLLLLLPWVPA. Residues 36–1221 lie on the Extracellular side of the membrane; that stretch reads GLVPPETPSV…PLPLPFPLLE (1186 aa). One can recognise an EGF-like 1 domain in the interval 71-110; that stretch reads ELGGCATQPCHHGALCVPQGPDPNSFRCYCVPGFQGPHCE. Intrachain disulfides connect C75/C86, C80/C98, C100/C109, C116/C127, C121/C136, C138/C147, C154/C165, C159/C174, C176/C185, C192/C203, C197/C212, C214/C224, C231/C242, C236/C251, C253/C262, C269/C280, C274/C310, C312/C321, C328/C339, C333/C348, C350/C359, C366/C377, C371/C386, C388/C397, C404/C415, C409/C428, and C430/C439. In terms of domain architecture, EGF-like 2; calcium-binding spans 112-148; the sequence is DIDECASRPCQHGGTCQNLADHYECHCPLGYAGVTCE. The EGF-like 3; calcium-binding domain maps to 150-186; that stretch reads EVDECSSAPCLHGGSCLDGVGSYRCVCAPGYAGANCQ. The EGF-like 4; calcium-binding domain occupies 188–225; it reads DVDECQSQPCAHGGVCHDLVNGFRCDCADTGYEGARCE. 2 consecutive EGF-like domains span residues 227-263 and 265-322; these read EVLECASAPCAHNASCLDGFRSFRCLCWPGFSGERCE and DEDE…NDCS. An N-linked (GlcNAc...) asparagine glycan is attached at N239. S271 carries an O-linked (Glc...) serine glycan. Positions 324-360 constitute an EGF-like 7; calcium-binding domain; that stretch reads DVDECASGPCLNGGSCQDLPNGFQCYCQDGYTGLTCQ. The 37-residue stretch at 362-398 folds into the EGF-like 8; calcium-binding domain; sequence DMDECQSEPCLHGGTCSDTVAGYICQCPEAWGGHDCS. An EGF-like 9 domain is found at 400–440; that stretch reads QLTGCQGHTCPLAATCIPTFKSGLHGYFCRCPPGTYGPFCG. N442 carries an N-linked (GlcNAc...) asparagine glycan. The region spanning 444 to 607 is the Laminin G-like 1 domain; it reads TFSVVSGSSV…ELKGTVLLGC (164 aa). 4 cysteine pairs are disulfide-bonded: C583/C607, C613/C624, C618/C633, and C635/C644. Positions 609–645 constitute an EGF-like 10 domain; it reads RREPCQPLPCAHGGACVDLWTHFRCDCPRPYRGATCT. The 160-residue stretch at 649-808 folds into the Laminin G-like 2 domain; that stretch reads PAATFGLGGA…GQSSNLTQGC (160 aa). Residues N672, N693, N789, and N803 are each glycosylated (N-linked (GlcNAc...) asparagine). 4 cysteine pairs are disulfide-bonded: C769–C808, C814–C825, C819–C834, and C836–C845. One can recognise an EGF-like 11 domain in the interval 810–846; sequence SEDTCNPNPCFNGGTCHVTWNDFYCTCSENFTGPTCA. 4 N-linked (GlcNAc...) asparagine glycosylation sites follow: N839, N889, N929, and N1006. Positions 872–1051 constitute a Laminin G-like 3 domain; the sequence is VAEATFREGP…PGSPAVSLGC (180 aa). Disulfide bonds link C1010-C1051, C1057-C1068, C1062-C1077, C1079-C1088, C1095-C1105, C1100-C1115, C1117-C1126, C1135-C1147, C1141-C1156, C1158-C1167, C1174-C1185, C1179-C1194, and C1196-C1205. 4 consecutive EGF-like domains span residues 1053–1089, 1091–1127, 1131–1168, and 1170–1206; these read GGPVCSPSPCLHGGACRDLFDAFACSCGPAWEGPRCE, RADPCRSTPCVRGQCHARPDGRFECRCPPGFSGPRCR, LPQGCNLNSTCKDGAPCEGGPLGTNCSCQEGLAGLRCQ, and LDKPCEASPCLNGGTCRVASGIFECTCSAGFSGQFCE. 2 N-linked (GlcNAc...) asparagine glycosylation sites follow: N1138 and N1155. A helical transmembrane segment spans residues 1222 to 1242; that stretch reads VAVPAACACLLLLLLGLLSGI. Topologically, residues 1243 to 1282 are cytoplasmic; sequence LAARKRRQSEGTYSPSQQEVAGARLEMDSVLKVPPEERLI. An interaction with EPB41L5 region spans residues 1246 to 1282; it reads RKRRQSEGTYSPSQQEVAGARLEMDSVLKVPPEERLI.

Belongs to the Crumbs protein family. As to quaternary structure, interacts (via intracellular domain) with EPB41L5. Post-translationally, O-glucosylated by POGLUT1 at Ser-271; consists of an O-glucose trisaccharide, in which the O-glucose is elongated by the addition of two xylose residues. O-glucosylation is required for localization at the plasma membrane. In terms of tissue distribution, in the adult eye, strongly expressed in the outer nuclear layer, containing the cell bodies of the photoreceptor cells, and in the inner nuclear layer, containing the cell bodies of the horizontal, bipolar, amacrine, and Mueller glial cells. Also expressed in some cells in the ganglion cell layer (or may be displaced amacrine cells rather than ganglion cells).

It is found in the apical cell membrane. Its function is as follows. Apical polarity protein that plays a central role during the epithelial-to-mesenchymal transition (EMT) at gastrulation, when newly specified mesodermal cells move inside the embryo. Acts by promoting cell ingression, the process by which cells leave the epithelial epiblast and move inside the embryo to form a new tissue layer. The anisotropic distribution of CRB2 and MYH10/myosin-IIB at cell edges define which cells will ingress: cells with high apical CRB2 are probably extruded from the epiblast by neighboring cells with high levels of apical MYH10/myosin-IIB. Also required for maintenance of the apical polarity complex during development of the cortex. The protein is Protein crumbs homolog 2 of Mus musculus (Mouse).